Reading from the N-terminus, the 656-residue chain is Protein NO VEIN-LIKE (656 aa).

The interval 283–375 is disordered; sequence DKDYCGKHTR…HVKQKIPKSA (93 aa). Positions 299 to 308 are enriched in acidic residues; the sequence is EENDSADYEV. Positions 342-353 are enriched in basic and acidic residues; it reads ESRNHEKSDSPK. Residues 354–371 show a composition bias toward basic residues; it reads LLRRGPSKLRRGHVKQKI.

In Arabidopsis thaliana (Mouse-ear cress), this protein is Protein NO VEIN-LIKE.